The following is a 621-amino-acid chain: Myosin-binding protein C, slow-type (621 aa).

Ig-like C2-type domains follow at residues 1–53 (EEIV…VDLR), 54–142 (PLKI…HVID), and 144–241 (PKII…LWIS). The residue at position 28 (Thr-28) is a Phosphothreonine. Ser-233 carries the post-translational modification Phosphoserine. 3 consecutive Fibronectin type-III domains span residues 244 to 343 (LRLA…TSPP), 344 to 459 (TLLA…IEPP), and 556 to 621 (PPQA…VIGN). Thr-420 is modified (phosphothreonine). Tyr-445 carries the post-translational modification Phosphotyrosine. One can recognise an Ig-like C2-type 4 domain in the interval 459–553 (PKIRIPRHLK…ASIDIQIVDR (95 aa)).

This sequence belongs to the immunoglobulin superfamily. MyBP family. In terms of assembly, interacts with USP25 (isoform USP25m only); the interaction prevents proteasomal degradation of MYBPC1.

Thick filament-associated protein located in the crossbridge region of vertebrate striated muscle a bands. Slow skeletal protein that binds to both myosin and actin. In vitro, binds to native thin filaments and modifies the activity of actin-activated myosin ATPase. May modulate muscle contraction or may play a more structural role. The protein is Myosin-binding protein C, slow-type (Mybpc1) of Rattus norvegicus (Rat).